A 248-amino-acid chain; its full sequence is Biosynthetic peptidoglycan transglycosylase (248 aa).

A helical transmembrane segment spans residues 17–37; that stretch reads LLIFFFASTILAVIVYRFMPV.

It belongs to the glycosyltransferase 51 family.

The protein localises to the cell inner membrane. The enzyme catalyses [GlcNAc-(1-&gt;4)-Mur2Ac(oyl-L-Ala-gamma-D-Glu-L-Lys-D-Ala-D-Ala)](n)-di-trans,octa-cis-undecaprenyl diphosphate + beta-D-GlcNAc-(1-&gt;4)-Mur2Ac(oyl-L-Ala-gamma-D-Glu-L-Lys-D-Ala-D-Ala)-di-trans,octa-cis-undecaprenyl diphosphate = [GlcNAc-(1-&gt;4)-Mur2Ac(oyl-L-Ala-gamma-D-Glu-L-Lys-D-Ala-D-Ala)](n+1)-di-trans,octa-cis-undecaprenyl diphosphate + di-trans,octa-cis-undecaprenyl diphosphate + H(+). It functions in the pathway cell wall biogenesis; peptidoglycan biosynthesis. Functionally, peptidoglycan polymerase that catalyzes glycan chain elongation from lipid-linked precursors. This is Biosynthetic peptidoglycan transglycosylase from Bacteroides thetaiotaomicron (strain ATCC 29148 / DSM 2079 / JCM 5827 / CCUG 10774 / NCTC 10582 / VPI-5482 / E50).